Consider the following 220-residue polypeptide: Ribosomal RNA large subunit methyltransferase E (220 aa).

The S-adenosyl-L-methionine site is built by Gly60, Trp62, Asp92, Asp108, and Asp133. The active-site Proton acceptor is the Lys173.

Belongs to the class I-like SAM-binding methyltransferase superfamily. RNA methyltransferase RlmE family.

Its subcellular location is the cytoplasm. The enzyme catalyses uridine(2552) in 23S rRNA + S-adenosyl-L-methionine = 2'-O-methyluridine(2552) in 23S rRNA + S-adenosyl-L-homocysteine + H(+). Functionally, specifically methylates the uridine in position 2552 of 23S rRNA at the 2'-O position of the ribose in the fully assembled 50S ribosomal subunit. The sequence is that of Ribosomal RNA large subunit methyltransferase E from Paraburkholderia phytofirmans (strain DSM 17436 / LMG 22146 / PsJN) (Burkholderia phytofirmans).